We begin with the raw amino-acid sequence, 105 residues long: UPF0148 protein PYRAB12700 (105 aa).

This sequence belongs to the UPF0148 family.

The chain is UPF0148 protein PYRAB12700 from Pyrococcus abyssi (strain GE5 / Orsay).